The chain runs to 254 residues: Tubulin-specific chaperone B (254 aa).

The region spanning 182-225 (PLPLDVMGTWCGVEFPEAAGKNDGRINGVTLFGPVAPGHGSFVR) is the CAP-Gly domain. The tract at residues 234–254 (KDEESAEVEDVHDDVESDDEI) is disordered. A compositionally biased stretch (acidic residues) spans 237 to 254 (ESAEVEDVHDDVESDDEI).

It belongs to the TBCB family. In terms of assembly, binds to monomeric alpha-tubulin.

It localises to the cytoplasm. The protein resides in the cytoskeleton. Functionally, acts to sequester alpha-tubulin from interaction with beta-tubulin, raising the possibility that it plays a regulatory role in the formation of the tubulin heterodimer. In Saccharomyces cerevisiae (strain ATCC 204508 / S288c) (Baker's yeast), this protein is Tubulin-specific chaperone B (ALF1).